The sequence spans 297 residues: Protoheme IX farnesyltransferase (297 aa).

Helical transmembrane passes span 26-46, 48-68, 96-116, 120-140, 147-167, 174-194, 218-238, 245-265, and 276-296; these read VTQLAVFCAVIGMFLATPGMV, YPVLFGGIVGIWLLAGAAFAV, LHIIIFSIILGSLGMIILWNF, LTMWLTLATFVGYAVIYTWLL, NIVIGGLSGAMPPALGWAAVT, AWHLVLIIFVWTPPHFWALAL, LLNIVLYTLILIAATMLPYIY, YLISAIILGLLFLAYVVALFI, and FRFSITYLSLLFAALLVDHYF.

The protein belongs to the UbiA prenyltransferase family. Protoheme IX farnesyltransferase subfamily.

The protein localises to the cell inner membrane. It catalyses the reaction heme b + (2E,6E)-farnesyl diphosphate + H2O = Fe(II)-heme o + diphosphate. It participates in porphyrin-containing compound metabolism; heme O biosynthesis; heme O from protoheme: step 1/1. Functionally, converts heme B (protoheme IX) to heme O by substitution of the vinyl group on carbon 2 of heme B porphyrin ring with a hydroxyethyl farnesyl side group. The protein is Protoheme IX farnesyltransferase of Polynucleobacter necessarius subsp. necessarius (strain STIR1).